The primary structure comprises 430 residues: Serine--tRNA ligase (430 aa).

The tract at residues 44–65 is disordered; it reads TESLQAERNSRSKSIGAAKARG. Residue 237 to 239 coordinates L-serine; sequence TAE. 268–270 provides a ligand contact to ATP; the sequence is RSE. Glutamate 291 is an L-serine binding site. 355–358 serves as a coordination point for ATP; that stretch reads EISS. Serine 391 provides a ligand contact to L-serine.

The protein belongs to the class-II aminoacyl-tRNA synthetase family. Type-1 seryl-tRNA synthetase subfamily. In terms of assembly, homodimer. The tRNA molecule binds across the dimer.

The protein localises to the cytoplasm. The enzyme catalyses tRNA(Ser) + L-serine + ATP = L-seryl-tRNA(Ser) + AMP + diphosphate + H(+). It carries out the reaction tRNA(Sec) + L-serine + ATP = L-seryl-tRNA(Sec) + AMP + diphosphate + H(+). Its pathway is aminoacyl-tRNA biosynthesis; selenocysteinyl-tRNA(Sec) biosynthesis; L-seryl-tRNA(Sec) from L-serine and tRNA(Sec): step 1/1. In terms of biological role, catalyzes the attachment of serine to tRNA(Ser). Is also able to aminoacylate tRNA(Sec) with serine, to form the misacylated tRNA L-seryl-tRNA(Sec), which will be further converted into selenocysteinyl-tRNA(Sec). The chain is Serine--tRNA ligase from Edwardsiella ictaluri (strain 93-146).